Here is a 290-residue protein sequence, read N- to C-terminus: Alpha-mannosidase (290 aa).

Aspartate 17 serves as the catalytic Nucleophile. Asparagine 64 carries N-linked (GlcNAc...) asparagine glycosylation.

The protein belongs to the glycosyl hydrolase 38 family. In terms of assembly, dimer. Zn(2+) is required as a cofactor.

The catalysed reaction is Hydrolysis of terminal, non-reducing alpha-D-mannose residues in alpha-D-mannosides.. With respect to regulation, inhibited by swainsonine but not by 1-desoxymannojirimycin. Liberates mannose from p-nitrophenyl-alpha-D-mannoside. The sequence is that of Alpha-mannosidase from Lablab purpureus (Hyacinth bean).